The primary structure comprises 560 residues: Dihydroxy-acid dehydratase (560 aa).

A Mg(2+)-binding site is contributed by Asp80. Residue Cys121 coordinates [2Fe-2S] cluster. Residues Asp122 and Lys123 each contribute to the Mg(2+) site. Lys123 bears the N6-carboxylysine mark. [2Fe-2S] cluster is bound at residue Cys194. Glu447 is a Mg(2+) binding site. The Proton acceptor role is filled by Ser473.

This sequence belongs to the IlvD/Edd family. Homodimer. Requires [2Fe-2S] cluster as cofactor. Mg(2+) serves as cofactor.

It carries out the reaction (2R)-2,3-dihydroxy-3-methylbutanoate = 3-methyl-2-oxobutanoate + H2O. The catalysed reaction is (2R,3R)-2,3-dihydroxy-3-methylpentanoate = (S)-3-methyl-2-oxopentanoate + H2O. The protein operates within amino-acid biosynthesis; L-isoleucine biosynthesis; L-isoleucine from 2-oxobutanoate: step 3/4. It participates in amino-acid biosynthesis; L-valine biosynthesis; L-valine from pyruvate: step 3/4. Functions in the biosynthesis of branched-chain amino acids. Catalyzes the dehydration of (2R,3R)-2,3-dihydroxy-3-methylpentanoate (2,3-dihydroxy-3-methylvalerate) into 2-oxo-3-methylpentanoate (2-oxo-3-methylvalerate) and of (2R)-2,3-dihydroxy-3-methylbutanoate (2,3-dihydroxyisovalerate) into 2-oxo-3-methylbutanoate (2-oxoisovalerate), the penultimate precursor to L-isoleucine and L-valine, respectively. This chain is Dihydroxy-acid dehydratase, found in Chlorobaculum tepidum (strain ATCC 49652 / DSM 12025 / NBRC 103806 / TLS) (Chlorobium tepidum).